We begin with the raw amino-acid sequence, 386 residues long: Succinyl-diaminopimelate desuccinylase (386 aa).

Residue His-75 participates in Zn(2+) binding. Asp-77 is an active-site residue. Residue Asp-108 participates in Zn(2+) binding. The active-site Proton acceptor is the Glu-138. Positions 139, 167, and 356 each coordinate Zn(2+).

It belongs to the peptidase M20A family. DapE subfamily. As to quaternary structure, homodimer. Zn(2+) serves as cofactor. The cofactor is Co(2+).

It catalyses the reaction N-succinyl-(2S,6S)-2,6-diaminopimelate + H2O = (2S,6S)-2,6-diaminopimelate + succinate. It participates in amino-acid biosynthesis; L-lysine biosynthesis via DAP pathway; LL-2,6-diaminopimelate from (S)-tetrahydrodipicolinate (succinylase route): step 3/3. Catalyzes the hydrolysis of N-succinyl-L,L-diaminopimelic acid (SDAP), forming succinate and LL-2,6-diaminopimelate (DAP), an intermediate involved in the bacterial biosynthesis of lysine and meso-diaminopimelic acid, an essential component of bacterial cell walls. This is Succinyl-diaminopimelate desuccinylase from Caulobacter vibrioides (strain ATCC 19089 / CIP 103742 / CB 15) (Caulobacter crescentus).